The sequence spans 89 residues: Small ribosomal subunit protein uS17 (89 aa).

It belongs to the universal ribosomal protein uS17 family. As to quaternary structure, part of the 30S ribosomal subunit.

In terms of biological role, one of the primary rRNA binding proteins, it binds specifically to the 5'-end of 16S ribosomal RNA. This is Small ribosomal subunit protein uS17 from Bdellovibrio bacteriovorus (strain ATCC 15356 / DSM 50701 / NCIMB 9529 / HD100).